A 302-amino-acid chain; its full sequence is Haloalkane dehalogenase (302 aa).

An AB hydrolase-1 domain is found at 48-150 (PVLLMHGEPS…AGLVIANTGL (103 aa)). Aspartate 123 (nucleophile) is an active-site residue. Aspartate 249 functions as the Proton donor in the catalytic mechanism. The active-site Proton acceptor is histidine 278.

Belongs to the haloalkane dehalogenase family. Type 1 subfamily. In terms of assembly, monomer.

It carries out the reaction 1-haloalkane + H2O = a halide anion + a primary alcohol + H(+). Catalyzes hydrolytic cleavage of carbon-halogen bonds in halogenated aliphatic compounds, leading to the formation of the corresponding primary alcohols, halide ions and protons. In Caulobacter sp. (strain K31), this protein is Haloalkane dehalogenase.